The chain runs to 68 residues: Conotoxin Vx2 (68 aa).

The signal sequence occupies residues 1–20; it reads MMSKLGVLVTICLLLFPLTA. The propeptide occupies 21 to 47; it reads LPLDGDQPADHPAKRTQDHNLASPISA. Cystine bridges form between cysteine 55/cysteine 68, cysteine 56/cysteine 61, and cysteine 57/cysteine 65.

Belongs to the conotoxin M superfamily. Expressed by the venom duct.

It localises to the secreted. Functionally, in vivo, elicits a series of symptoms, such as being sedative, tail stiffening and twisted jumping, when injected intracranially into mice. The polypeptide is Conotoxin Vx2 (Conus vexillum (Flag cone)).